A 150-amino-acid chain; its full sequence is UPF0178 protein Rru_A0086 (150 aa).

Belongs to the UPF0178 family.

This is UPF0178 protein Rru_A0086 from Rhodospirillum rubrum (strain ATCC 11170 / ATH 1.1.1 / DSM 467 / LMG 4362 / NCIMB 8255 / S1).